Here is a 103-residue protein sequence, read N- to C-terminus: MAHYKAADSKREQFRRYLEKSGVLDTLTKVLVALYEEPEKPNSALDFLKHHLGAATPENPEIELLRLELAEMKEKYEAIVEENKKLKTKLAQYEPPQEEKRAE.

This sequence belongs to the AMY1 family. As to quaternary structure, binds via its C-terminal region to the N-terminal region of MYC. Associates with AKAP1/S-AKAP84. Interacts with MYCBPAP. Interacts with CFAP91.

The protein localises to the cytoplasm. It localises to the nucleus. In terms of biological role, may control the transcriptional activity of MYC. Stimulates the activation of E box-dependent transcription by MYC. This Bos taurus (Bovine) protein is c-Myc-binding protein (MYCBP).